The chain runs to 298 residues: Ribosomal protein L11 methyltransferase (298 aa).

Residues Thr139, Gly163, Asp185, and Asn232 each coordinate S-adenosyl-L-methionine.

Belongs to the methyltransferase superfamily. PrmA family.

The protein resides in the cytoplasm. The catalysed reaction is L-lysyl-[protein] + 3 S-adenosyl-L-methionine = N(6),N(6),N(6)-trimethyl-L-lysyl-[protein] + 3 S-adenosyl-L-homocysteine + 3 H(+). Functionally, methylates ribosomal protein L11. In Microcystis aeruginosa (strain NIES-843 / IAM M-2473), this protein is Ribosomal protein L11 methyltransferase.